The primary structure comprises 944 residues: Translation initiation factor IF-2 (944 aa).

Disordered stretches follow at residues 50–91 and 114–349; these read SAKT…FAGK and KVEV…VPAT. 4 stretches are compositionally biased toward basic and acidic residues: residues 75-86, 124-157, 164-185, and 199-233; these read ESAKKNKEDHPR, VVTEKPKASEPVKKAEPKVEAKSEPKVEKVETKD, AEVKPENVADKKEPVVTEEKKK, and KRAEDIKKEQAAARPEKKKFDKNRNDRNNRSDNRR. Over residues 267 to 280 the composition is skewed to polar residues; the sequence is SSGSAPATDSFTPA. The segment covering 286-307 has biased composition (basic and acidic residues); that stretch reads SRRDRDRKKSDNNRDNTKDGNR. 2 stretches are compositionally biased toward polar residues: residues 317 to 331 and 338 to 348; these read NRNQVRNARNSNWNQ and YQNNQSSSVPA. One can recognise a tr-type G domain in the interval 443-614; sequence ERPAVVTIMG…LLVAEVQELK (172 aa). The G1 stretch occupies residues 452-459; it reads GHVDHGKT. Position 452–459 (452–459) interacts with GTP; it reads GHVDHGKT. Residues 477–481 form a G2 region; the sequence is GITQH. Positions 498–501 are G3; sequence DTPG. Residues 498–502 and 552–555 each bind GTP; these read DTPGH and NKID. The tract at residues 552-555 is G4; it reads NKID. The tract at residues 590–592 is G5; the sequence is SAK.

Belongs to the TRAFAC class translation factor GTPase superfamily. Classic translation factor GTPase family. IF-2 subfamily.

The protein localises to the cytoplasm. Functionally, one of the essential components for the initiation of protein synthesis. Protects formylmethionyl-tRNA from spontaneous hydrolysis and promotes its binding to the 30S ribosomal subunits. Also involved in the hydrolysis of GTP during the formation of the 70S ribosomal complex. The chain is Translation initiation factor IF-2 (infB) from Lactococcus lactis subsp. lactis (strain IL1403) (Streptococcus lactis).